A 735-amino-acid polypeptide reads, in one-letter code: MTDTLFERSDIDALLAGRHPDPFACLGPHGQTGQVVVRAVLPGAKSVHALSPEGAELGTLACVDRAGCFAGTIPRNGGAPHYLLAIDWPDARQVIDDAYAFGTLLDDAVLARFSAGDPAAVLDCLGATPARIDDTDGVRFAVWAPNAQRVSVVGDFNGWDGRRHPMRLRRPSGVWELFVPGIGAGECYKYELRAADGRVLPHKSDPCARATEAPPRTASVVADVAALDAFAWHDEGWMHARPRADRYRVPWSIYEVHAESWQRVPEEMNRSATWDELAERLIPYVQGMGFTHVEFMPIAEYPFGGSWGYQPVAQFAPSARFGPVDGFARFVDRAHAAGIGVLVDWVPAHFPDDPHGLAQFDGTALYEHADPREGLHPDWHTCVFNVGRTEVGAFLAASALAWARRYHVDGIRVDAVASMLYRDYSRAEGEWVPNVHGGRENLESVAFLRMLNDTLHGAAAPAGVVTVAEESTAWPGVTAPTGDGGLGFDFKWNMGWMHDTLAYVREDPVHRRYHHDRMTFGLVYAFSERFVLPLSHDEVVHGKGSLVAKMPGDAWQRLATLRAYFGFMWAHPGKKLLFMGSEFAQWAEFAHDATPHWDLLDAPAHRGVQRLVRDLNRTYAAEPALHALDCHAAGFSWLIGDDRDNSVFAFARRDEAGHLVVAICNFTPVPRASYRVGLPAPGQWRELMNTDAAPYGGTNAGNDGAVWAEAVPAHGEAWSALLRLPPLATLWLRPA.

Aspartate 414 (nucleophile) is an active-site residue. Glutamate 469 acts as the Proton donor in catalysis.

It belongs to the glycosyl hydrolase 13 family. GlgB subfamily. Monomer.

It carries out the reaction Transfers a segment of a (1-&gt;4)-alpha-D-glucan chain to a primary hydroxy group in a similar glucan chain.. It functions in the pathway glycan biosynthesis; glycogen biosynthesis. In terms of biological role, catalyzes the formation of the alpha-1,6-glucosidic linkages in glycogen by scission of a 1,4-alpha-linked oligosaccharide from growing alpha-1,4-glucan chains and the subsequent attachment of the oligosaccharide to the alpha-1,6 position. The chain is 1,4-alpha-glucan branching enzyme GlgB from Burkholderia lata (strain ATCC 17760 / DSM 23089 / LMG 22485 / NCIMB 9086 / R18194 / 383).